The chain runs to 70 residues: Large ribosomal subunit protein bL31 (70 aa).

Cysteine 16, cysteine 18, cysteine 36, and cysteine 39 together coordinate Zn(2+).

It belongs to the bacterial ribosomal protein bL31 family. Type A subfamily. Part of the 50S ribosomal subunit. It depends on Zn(2+) as a cofactor.

Its function is as follows. Binds the 23S rRNA. This is Large ribosomal subunit protein bL31 from Tolumonas auensis (strain DSM 9187 / NBRC 110442 / TA 4).